Reading from the N-terminus, the 647-residue chain is Endogenous retrovirus group K member 8 Gag polyprotein (647 aa).

G2 carries N-myristoyl glycine lipidation. A disordered region spans residues 165–264 (GKGPELVGPS…APPSRQGSEL (100 aa)). Residues 232–247 (GMPPAPQGREPYPQPP) show a composition bias toward pro residues. 2 CCHC-type zinc fingers span residues 544–561 (GKCY…NCPV) and 580–597 (DLCP…QCRS). Residues 598-641 (KFDKNGQPLSGNEQRGQPQAPQQTGAFPIQPFVPQGFQDNNPHC) form a disordered region. Residues 604 to 622 (QPLSGNEQRGQPQAPQQTG) are compositionally biased toward polar residues.

It belongs to the beta type-B retroviral Gag protein family. HERV class-II K(HML-2) gag subfamily. Myristoylation is essential for retroviral assembly. Alteration of the glycine residue leads to a block in the budding of particles and an accumulation of Gag inside the cell. Post-translationally, specific enzymatic cleavages may yield mature proteins.

It localises to the cell membrane. Its function is as follows. The products of the Gag polyproteins of infectious retroviruses perform highly complex orchestrated tasks during the assembly, budding, maturation, and infection stages of the viral replication cycle. During viral assembly, the proteins form membrane associations and self-associations that ultimately result in budding of an immature virion from the infected cell. Gag precursors also function during viral assembly to selectively bind and package two plus strands of genomic RNA. Endogenous Gag proteins may have kept, lost or modified their original function during evolution. The polypeptide is Endogenous retrovirus group K member 8 Gag polyprotein (ERVK-8) (Homo sapiens (Human)).